Consider the following 305-residue polypeptide: Glutaminase (305 aa).

The substrate site is built by serine 61, asparagine 113, glutamate 158, asparagine 165, tyrosine 189, tyrosine 241, and valine 259.

This sequence belongs to the glutaminase family. In terms of assembly, homotetramer.

It carries out the reaction L-glutamine + H2O = L-glutamate + NH4(+). This Alkaliphilus metalliredigens (strain QYMF) protein is Glutaminase.